Here is a 147-residue protein sequence, read N- to C-terminus: uncharacterized protein (147 aa).

This is an uncharacterized protein from Saccharomyces cerevisiae (strain ATCC 204508 / S288c) (Baker's yeast).